The primary structure comprises 492 residues: KRAB-A domain-containing protein 2 (492 aa).

The KRAB domain maps to 36–117 (LFQEATAFEN…MREKFLMSVT (82 aa)). S115 carries the phosphoserine modification. T117 carries the post-translational modification Phosphothreonine. In terms of domain architecture, Integrase catalytic spans 247–415 (RGLAPKPMTF…SPFEAMFGYK (169 aa)). Residues 427 to 457 (RETVATLQTEEELEIAEEQLENSLWIRQEER) are a coiled coil. Basic and acidic residues predominate over residues 455–465 (EERAEIGADRS). The tract at residues 455-492 (EERAEIGADRSDMDDDMDPTPEASEPSTSQGTSGLLCW) is disordered. The span at 479-492 (EPSTSQGTSGLLCW) shows a compositional bias: polar residues.

The chain is KRAB-A domain-containing protein 2 (KRBA2) from Homo sapiens (Human).